We begin with the raw amino-acid sequence, 317 residues long: MAIRKLLLLLKPIDPYPFLQTEGASLIKNPQVLQYLESRCKVHKNAIKFCQEILSKKPVEWKPISRNDLSHPIRDVDMVITVGGDGTLLHASHFIDDSVPVLGVNSDPTQAHEVEELSDQFDASRSTGHLCAATVENFEQVLDDILFGRVVPAKVSRISLKLNSETLLSHALNDILIAQPCPAAVSRFSFKIKNKDGASSPKTVNCRSSGLRICTAAGSTAAMQSAGGFVMPMLSRDLQFMVREPISPGSTASLMHSTFKPDQFMDVNWYSDHGTIYIDGCQVQHSVQLGDTIEISSDAPVLNVFLSHGISQIRSRY.

Belongs to the NAD kinase family. As to quaternary structure, homodimer. In terms of tissue distribution, ubiquitous.

It localises to the cytoplasm. The enzyme catalyses NADH + ATP = ADP + NADPH + H(+). Its activity is regulated as follows. Two-fold decrease in activity in the presence of PPi, iodoacetate or para-chloromercuribenzoate. In terms of biological role, phosphorylates specifically NADH. Can phosphorylate NAD with a 100-fold decrease in efficiency compared to NADH. Prefers ATP as nucleoside triphosphate substrate. Can also utilize UTP, GTP and CTP. Key source of the cellular reductant NADPH which is an important antioxidant factor. This is NADH kinase (NADK3) from Arabidopsis thaliana (Mouse-ear cress).